Here is a 90-residue protein sequence, read N- to C-terminus: Small ribosomal subunit protein bS16 (90 aa).

Belongs to the bacterial ribosomal protein bS16 family.

The chain is Small ribosomal subunit protein bS16 from Fervidobacterium nodosum (strain ATCC 35602 / DSM 5306 / Rt17-B1).